The chain runs to 147 residues: D-aminoacyl-tRNA deacylase (147 aa).

Residues 138–139 carry the Gly-cisPro motif, important for rejection of L-amino acids motif; sequence GP.

This sequence belongs to the DTD family. Homodimer.

The protein localises to the cytoplasm. It carries out the reaction glycyl-tRNA(Ala) + H2O = tRNA(Ala) + glycine + H(+). The enzyme catalyses a D-aminoacyl-tRNA + H2O = a tRNA + a D-alpha-amino acid + H(+). An aminoacyl-tRNA editing enzyme that deacylates mischarged D-aminoacyl-tRNAs. Also deacylates mischarged glycyl-tRNA(Ala), protecting cells against glycine mischarging by AlaRS. Acts via tRNA-based rather than protein-based catalysis; rejects L-amino acids rather than detecting D-amino acids in the active site. By recycling D-aminoacyl-tRNA to D-amino acids and free tRNA molecules, this enzyme counteracts the toxicity associated with the formation of D-aminoacyl-tRNA entities in vivo and helps enforce protein L-homochirality. This is D-aminoacyl-tRNA deacylase from Prosthecochloris aestuarii (strain DSM 271 / SK 413).